A 156-amino-acid polypeptide reads, in one-letter code: Small ribosomal subunit protein uS11 (156 aa).

The segment at 1–27 is disordered; sequence MSEKEQKEVEAKESSGKAEERRETREK.

Belongs to the universal ribosomal protein uS11 family. As to quaternary structure, part of the 30S ribosomal subunit.

Functionally, located on the platform of the 30S subunit. The protein is Small ribosomal subunit protein uS11 of Thermofilum pendens (strain DSM 2475 / Hrk 5).